We begin with the raw amino-acid sequence, 258 residues long: Tryptophan synthase alpha chain (258 aa).

Active-site proton acceptor residues include glutamate 52 and aspartate 63.

Belongs to the TrpA family. In terms of assembly, tetramer of two alpha and two beta chains.

It catalyses the reaction (1S,2R)-1-C-(indol-3-yl)glycerol 3-phosphate + L-serine = D-glyceraldehyde 3-phosphate + L-tryptophan + H2O. It functions in the pathway amino-acid biosynthesis; L-tryptophan biosynthesis; L-tryptophan from chorismate: step 5/5. The alpha subunit is responsible for the aldol cleavage of indoleglycerol phosphate to indole and glyceraldehyde 3-phosphate. The chain is Tryptophan synthase alpha chain from Streptococcus pneumoniae (strain 70585).